Here is a 1038-residue protein sequence, read N- to C-terminus: Kinesin-like protein KIF17 (1038 aa).

In terms of domain architecture, Kinesin motor spans 5 to 335; the sequence is SVKVVVRCRP…LRYANRAKNI (331 aa). 91-98 lines the ATP pocket; sequence GQTGSGKS. Residues 346-470 are a coiled coil; sequence KDALLREYQE…ETEAILKAEV (125 aa). 3 disordered regions span residues 379 to 401, 503 to 559, and 636 to 657; these read TQTP…VQQD, LSMP…GPEE, and DSSQ…LLEP. Polar residues-rich tracts occupy residues 533–551 and 636–651; these read SEFS…SATS and DSSQ…QPSS. The stretch at 748 to 855 forms a coiled coil; the sequence is QQVLARLQLL…QLEKIDYLAT (108 aa). 2 disordered regions span residues 916-940 and 976-1038; these read VVPT…PHMQ and MKSL…GEPL. Residues 983-1000 show a composition bias toward low complexity; that stretch reads NSPPGLNSSLSNNSALPP.

The protein belongs to the TRAFAC class myosin-kinesin ATPase superfamily. Kinesin family. In terms of assembly, homodimer. Interacts with APBA1 (via PDZ domain); the interaction is direct and is required for association of KIF17 with the cargo that is to be transported. Interacts with IFT B complex components IFT52 and IFT57. Interacts with IFT70B. Interacts with PIWIL1. Interacts with TBATA. As to expression, highly expressed in the gray matter of the brain, especially in the hippocampus.

It is found in the cytoplasm. The protein resides in the cytoskeleton. It localises to the cell projection. Its subcellular location is the cilium. The protein localises to the dendrite. In terms of biological role, dendrite-specific motor protein which, in association with the Apba1-containing complex (LIN-10-LIN-2-LIN-7 complex), transports vesicles containing N-methyl-D-aspartate (NMDA) receptor subunit NR2B along microtubules. The polypeptide is Kinesin-like protein KIF17 (Kif17) (Mus musculus (Mouse)).